The sequence spans 227 residues: Cytidylate kinase (227 aa).

12–20 (GPSGAGKGT) is a binding site for ATP.

This sequence belongs to the cytidylate kinase family. Type 1 subfamily.

It is found in the cytoplasm. The catalysed reaction is CMP + ATP = CDP + ADP. It carries out the reaction dCMP + ATP = dCDP + ADP. The sequence is that of Cytidylate kinase from Salmonella choleraesuis (strain SC-B67).